The chain runs to 250 residues: Hydroxyacylglutathione hydrolase (250 aa).

Zn(2+)-binding residues include His52, His54, Asp56, His57, His107, Asp128, and His166.

It belongs to the metallo-beta-lactamase superfamily. Glyoxalase II family. In terms of assembly, monomer. It depends on Zn(2+) as a cofactor.

The catalysed reaction is an S-(2-hydroxyacyl)glutathione + H2O = a 2-hydroxy carboxylate + glutathione + H(+). The protein operates within secondary metabolite metabolism; methylglyoxal degradation; (R)-lactate from methylglyoxal: step 2/2. Thiolesterase that catalyzes the hydrolysis of S-D-lactoyl-glutathione to form glutathione and D-lactic acid. This chain is Hydroxyacylglutathione hydrolase, found in Neisseria gonorrhoeae (strain ATCC 700825 / FA 1090).